We begin with the raw amino-acid sequence, 347 residues long: Ribosomal RNA small subunit methyltransferase C (347 aa).

Belongs to the methyltransferase superfamily. RsmC family. In terms of assembly, monomer.

It localises to the cytoplasm. The catalysed reaction is guanosine(1207) in 16S rRNA + S-adenosyl-L-methionine = N(2)-methylguanosine(1207) in 16S rRNA + S-adenosyl-L-homocysteine + H(+). Its function is as follows. Specifically methylates the guanine in position 1207 of 16S rRNA in the 30S particle. The chain is Ribosomal RNA small subunit methyltransferase C from Shewanella baltica (strain OS185).